A 675-amino-acid polypeptide reads, in one-letter code: Rho guanine nucleotide exchange factor 37 (675 aa).

A disordered region spans residues 1–26; it reads MAKHGADEPSSRSGSPDREGRASEDR. The region spanning 30–213 is the DH domain; that stretch reads HQRLAVRELI…QDVNTNINEY (184 aa). One can recognise a BAR domain in the interval 254-455; it reads LKQEAGLIPR…LPHHHVPEPA (202 aa). 2 SH3 domains span residues 506–569 and 602–665; these read GPGK…LYHV and PTMN…RARS.

In terms of biological role, may act as a guanine nucleotide exchange factor (GEF). This is Rho guanine nucleotide exchange factor 37 (ARHGEF37) from Homo sapiens (Human).